A 78-amino-acid chain; its full sequence is Large ribosomal subunit protein bL31 (78 aa).

Positions 16, 18, 38, and 41 each coordinate Zn(2+).

The protein belongs to the bacterial ribosomal protein bL31 family. Type A subfamily. In terms of assembly, part of the 50S ribosomal subunit. Zn(2+) is required as a cofactor.

In terms of biological role, binds the 23S rRNA. This is Large ribosomal subunit protein bL31 from Parafrankia sp. (strain EAN1pec).